A 278-amino-acid chain; its full sequence is Indole-3-glycerol phosphate synthase (278 aa).

This sequence belongs to the TrpC family.

The catalysed reaction is 1-(2-carboxyphenylamino)-1-deoxy-D-ribulose 5-phosphate + H(+) = (1S,2R)-1-C-(indol-3-yl)glycerol 3-phosphate + CO2 + H2O. It participates in amino-acid biosynthesis; L-tryptophan biosynthesis; L-tryptophan from chorismate: step 4/5. The protein is Indole-3-glycerol phosphate synthase of Stutzerimonas stutzeri (strain A1501) (Pseudomonas stutzeri).